Reading from the N-terminus, the 356-residue chain is Dual-specificity RNA methyltransferase RlmN (356 aa).

Glutamate 89 serves as the catalytic Proton acceptor. Residues 108–341 enclose the Radical SAM core domain; the sequence is SHARYTICVS…CTIRESKGLD (234 aa). Cysteine 115 and cysteine 346 are oxidised to a cystine. [4Fe-4S] cluster is bound by residues cysteine 122, cysteine 126, and cysteine 129. S-adenosyl-L-methionine-binding positions include 172–173, serine 204, 227–229, and asparagine 303; these read GE and SLH. Cysteine 346 (S-methylcysteine intermediate) is an active-site residue.

This sequence belongs to the radical SAM superfamily. RlmN family. [4Fe-4S] cluster is required as a cofactor.

Its subcellular location is the cytoplasm. It carries out the reaction adenosine(2503) in 23S rRNA + 2 reduced [2Fe-2S]-[ferredoxin] + 2 S-adenosyl-L-methionine = 2-methyladenosine(2503) in 23S rRNA + 5'-deoxyadenosine + L-methionine + 2 oxidized [2Fe-2S]-[ferredoxin] + S-adenosyl-L-homocysteine. The catalysed reaction is adenosine(37) in tRNA + 2 reduced [2Fe-2S]-[ferredoxin] + 2 S-adenosyl-L-methionine = 2-methyladenosine(37) in tRNA + 5'-deoxyadenosine + L-methionine + 2 oxidized [2Fe-2S]-[ferredoxin] + S-adenosyl-L-homocysteine. In terms of biological role, specifically methylates position 2 of adenine 2503 in 23S rRNA and position 2 of adenine 37 in tRNAs. m2A2503 modification seems to play a crucial role in the proofreading step occurring at the peptidyl transferase center and thus would serve to optimize ribosomal fidelity. The sequence is that of Dual-specificity RNA methyltransferase RlmN from Campylobacter jejuni subsp. jejuni serotype O:2 (strain ATCC 700819 / NCTC 11168).